Here is a 101-residue protein sequence, read N- to C-terminus: Pro-corazonin (101 aa).

The signal sequence occupies residues 1–19 (MVTNITLILTLMTLASVTA). Residue Gln20 is modified to Pyrrolidone carboxylic acid. At Asn30 the chain carries Asparagine amide.

Belongs to the corazonin family.

The protein localises to the secreted. Cardioactive peptide. Corazonin is probably involved in the physiological regulation of the heart beat. In Bombyx mori (Silk moth), this protein is Pro-corazonin (crz).